The chain runs to 454 residues: Ribosomal protein uS12 methylthiotransferase RimO (454 aa).

The region spanning 9 to 124 (PKIGFVSLGC…VMDAVHLHMP (116 aa)) is the MTTase N-terminal domain. [4Fe-4S] cluster contacts are provided by Cys18, Cys54, Cys83, Cys155, Cys159, and Cys162. Residues 141-382 (LTPKHFAYLK…MLLQEEISKK (242 aa)) enclose the Radical SAM core domain. Residues 385–454 (QAKVGKTMRV…ADAHDLWAEA (70 aa)) enclose the TRAM domain.

Belongs to the methylthiotransferase family. RimO subfamily. [4Fe-4S] cluster serves as cofactor.

It localises to the cytoplasm. The enzyme catalyses L-aspartate(89)-[ribosomal protein uS12]-hydrogen + (sulfur carrier)-SH + AH2 + 2 S-adenosyl-L-methionine = 3-methylsulfanyl-L-aspartate(89)-[ribosomal protein uS12]-hydrogen + (sulfur carrier)-H + 5'-deoxyadenosine + L-methionine + A + S-adenosyl-L-homocysteine + 2 H(+). Functionally, catalyzes the methylthiolation of an aspartic acid residue of ribosomal protein uS12. The sequence is that of Ribosomal protein uS12 methylthiotransferase RimO from Herminiimonas arsenicoxydans.